A 550-amino-acid polypeptide reads, in one-letter code: Ribosomal protein S6 kinase beta (550 aa).

Residues 83-344 (FQLLKVLGKG…AEEIKSHAFF (262 aa)) form the Protein kinase domain. Residues 89-97 (LGKGGYGKV) and Lys-115 contribute to the ATP site. Asp-210 functions as the Proton acceptor in the catalytic mechanism. Positions 345-415 (KTTDWNLVYA…VAPSVLEMMN (71 aa)) constitute an AGC-kinase C-terminal domain. Position 404 is a phosphothreonine (Thr-404). 2 disordered regions span residues 433 to 466 (RAGA…GPNS) and 484 to 550 (TAGG…KRVM). Residue Ser-439 is modified to Phosphoserine. Positions 520 to 534 (TTTGNGSTTTTRPSN) are enriched in low complexity.

The protein belongs to the protein kinase superfamily. AGC Ser/Thr protein kinase family. S6 kinase subfamily. Mg(2+) is required as a cofactor. May be phosphorylated on Thr-404 by let-363/TOR.

The protein localises to the cell projection. It is found in the axon. Its subcellular location is the perikaryon. The enzyme catalyses L-seryl-[protein] + ATP = O-phospho-L-seryl-[protein] + ADP + H(+). It carries out the reaction L-threonyl-[protein] + ATP = O-phospho-L-threonyl-[protein] + ADP + H(+). Functionally, serine/threonine-protein kinase which regulates mRNA translation. Negatively regulates lifespan and resistance to starvation, oxidative stress, protein aggregation and P.aeruginosa-mediated infection. May regulate these processes by preventing the activation of transcription factor hif-1. Required, probably downstream of let-363/TOR, for the establishment of the proper number of germline progenitors by promoting cell cycle progression and preventing differentiation during larval development. Regulates germ cell size. In addition required for sperm production and embryo viability. Involved in axon regeneration of PLM and ALM neurons by inhibiting growth cone formation early after axotomy and later by inhibiting axon extension. Functions in axon regeneration and lifespan probably by preventing aak-2/AMPK activation. Negatively regulates autophagy. The protein is Ribosomal protein S6 kinase beta of Caenorhabditis elegans.